The chain runs to 499 residues: GTPase Der (499 aa).

EngA-type G domains lie at 3–166 (PVVA…LETL) and 213–386 (IKFA…QSAT). GTP contacts are provided by residues 9–16 (GRPNVGKS), 56–60 (DTGGI), 118–121 (NKTD), 219–226 (GRPNVGKS), 266–270 (DTAGV), and 331–334 (NKWD). Residues 387–471 (RRTSTAMLTR…PVRVEFQESA (85 aa)) form the KH-like domain.

It belongs to the TRAFAC class TrmE-Era-EngA-EngB-Septin-like GTPase superfamily. EngA (Der) GTPase family. As to quaternary structure, associates with the 50S ribosomal subunit.

Functionally, GTPase that plays an essential role in the late steps of ribosome biogenesis. In Aeromonas hydrophila subsp. hydrophila (strain ATCC 7966 / DSM 30187 / BCRC 13018 / CCUG 14551 / JCM 1027 / KCTC 2358 / NCIMB 9240 / NCTC 8049), this protein is GTPase Der.